A 68-amino-acid chain; its full sequence is Riparin-1.6 (68 aa).

The signal sequence occupies residues 1-15; the sequence is MKIIVFLAVLMLVSA. The propeptide occupies 16–41; it reads QVCLVSAAEMEHSSDNELSSRDLVKR. Cys47 and Cys53 are disulfide-bonded. Residue Cys53 is modified to Cysteine amide. Positions 57-68 are excised as a propeptide; the sequence is DIESSEGANGGE.

Expressed by the skin glands.

The protein localises to the secreted. This Crinia riparia (Streambank froglet) protein is Riparin-1.6.